The primary structure comprises 279 residues: Tryptophan synthase alpha chain (279 aa).

Residues E50 and D61 each act as proton acceptor in the active site.

This sequence belongs to the TrpA family. In terms of assembly, tetramer of two alpha and two beta chains.

It carries out the reaction (1S,2R)-1-C-(indol-3-yl)glycerol 3-phosphate + L-serine = D-glyceraldehyde 3-phosphate + L-tryptophan + H2O. It participates in amino-acid biosynthesis; L-tryptophan biosynthesis; L-tryptophan from chorismate: step 5/5. Functionally, the alpha subunit is responsible for the aldol cleavage of indoleglycerol phosphate to indole and glyceraldehyde 3-phosphate. The sequence is that of Tryptophan synthase alpha chain from Methylobacterium radiotolerans (strain ATCC 27329 / DSM 1819 / JCM 2831 / NBRC 15690 / NCIMB 10815 / 0-1).